The following is a 61-amino-acid chain: Large ribosomal subunit protein uL30 (61 aa).

This sequence belongs to the universal ribosomal protein uL30 family. In terms of assembly, part of the 50S ribosomal subunit.

The chain is Large ribosomal subunit protein uL30 from Thermosipho melanesiensis (strain DSM 12029 / CIP 104789 / BI429).